Here is a 159-residue protein sequence, read N- to C-terminus: Protein-export protein SecB (159 aa).

Belongs to the SecB family. In terms of assembly, homotetramer, a dimer of dimers. One homotetramer interacts with 1 SecA dimer.

It localises to the cytoplasm. Its function is as follows. One of the proteins required for the normal export of preproteins out of the cell cytoplasm. It is a molecular chaperone that binds to a subset of precursor proteins, maintaining them in a translocation-competent state. It also specifically binds to its receptor SecA. This chain is Protein-export protein SecB, found in Nitrobacter winogradskyi (strain ATCC 25391 / DSM 10237 / CIP 104748 / NCIMB 11846 / Nb-255).